The sequence spans 431 residues: Na(+)-translocating NADH-quinone reductase subunit F (431 aa).

The chain crosses the membrane as a helical span at residues 10-30; it reads IFIASTAFCALGLLLVAIILL. The 93-residue stretch at 41–133 folds into the 2Fe-2S ferredoxin-type domain; sequence CKLRINNDDS…DMNLEIEERY (93 aa). Positions 76, 82, 85, and 117 each coordinate [2Fe-2S] cluster. In terms of domain architecture, FAD-binding FR-type spans 136-286; it reads ASSWEGTVVS…SGPYGESFMK (151 aa). Residues 289 to 413 form a catalytic region; sequence NRPVIFLIGG…ALHNSSILTL (125 aa).

The protein belongs to the NqrF family. Composed of six subunits; NqrA, NqrB, NqrC, NqrD, NqrE and NqrF. Requires [2Fe-2S] cluster as cofactor. FAD is required as a cofactor.

The protein localises to the cell inner membrane. The catalysed reaction is a ubiquinone + n Na(+)(in) + NADH + H(+) = a ubiquinol + n Na(+)(out) + NAD(+). NQR complex catalyzes the reduction of ubiquinone-1 to ubiquinol by two successive reactions, coupled with the transport of Na(+) ions from the cytoplasm to the periplasm. The first step is catalyzed by NqrF, which accepts electrons from NADH and reduces ubiquinone-1 to ubisemiquinone by a one-electron transfer pathway. This chain is Na(+)-translocating NADH-quinone reductase subunit F, found in Chlamydia muridarum (strain MoPn / Nigg).